Here is a 320-residue protein sequence, read N- to C-terminus: Lipoyl synthase (320 aa).

Residues C56, C61, C67, C82, C86, C89, and S295 each contribute to the [4Fe-4S] cluster site. Positions 68–284 (WNRRTATFMI…REEALKRGFA (217 aa)) constitute a Radical SAM core domain. The interval 300-320 (EQSAQAVARRTGAGRAAQTGD) is disordered. The span at 303–320 (AQAVARRTGAGRAAQTGD) shows a compositional bias: low complexity.

It belongs to the radical SAM superfamily. Lipoyl synthase family. Requires [4Fe-4S] cluster as cofactor.

It is found in the cytoplasm. The catalysed reaction is [[Fe-S] cluster scaffold protein carrying a second [4Fe-4S](2+) cluster] + N(6)-octanoyl-L-lysyl-[protein] + 2 oxidized [2Fe-2S]-[ferredoxin] + 2 S-adenosyl-L-methionine + 4 H(+) = [[Fe-S] cluster scaffold protein] + N(6)-[(R)-dihydrolipoyl]-L-lysyl-[protein] + 4 Fe(3+) + 2 hydrogen sulfide + 2 5'-deoxyadenosine + 2 L-methionine + 2 reduced [2Fe-2S]-[ferredoxin]. It functions in the pathway protein modification; protein lipoylation via endogenous pathway; protein N(6)-(lipoyl)lysine from octanoyl-[acyl-carrier-protein]: step 2/2. Catalyzes the radical-mediated insertion of two sulfur atoms into the C-6 and C-8 positions of the octanoyl moiety bound to the lipoyl domains of lipoate-dependent enzymes, thereby converting the octanoylated domains into lipoylated derivatives. This Symbiobacterium thermophilum (strain DSM 24528 / JCM 14929 / IAM 14863 / T) protein is Lipoyl synthase.